Consider the following 84-residue polypeptide: Mu-Sparatoxin-Hp1 (84 aa).

The signal sequence occupies residues 1-20 (MKIAIVMTLLLVAFSTASFA). The propeptide occupies 21-35 (IEPIERAALDLVMAR). 3 disulfides stabilise this stretch: Cys54-Cys68, Cys61-Cys73, and Cys67-Cys78. The residue at position 82 (Leu82) is a Leucine amide.

As to expression, expressed by the venom gland.

The protein resides in the secreted. In terms of biological role, weakly nhibits voltage-gated sodium channels Nav1.7/SCN9A. High concentration of the toxin (3 uM) inhibits Nav1.7/SCN9A currents by 79%. This chain is Mu-Sparatoxin-Hp1, found in Heteropoda pingtungensis (Pingtung huntsman spider).